A 309-amino-acid chain; its full sequence is Syndecan-1 (309 aa).

An N-terminal signal peptide occupies residues M1–P22. Topologically, residues I24–G253 are extracellular. 2 disordered regions span residues N28–L57 and A142–S185. The segment covering E32–D42 has biased composition (acidic residues). S37 carries O-linked (Xyl...) (chondroitin sulfate) serine glycosylation. N43 is a glycosylation site (N-linked (GlcNAc...) asparagine). S45 and S47 each carry an O-linked (Xyl...) (heparan sulfate) serine glycan. Polar residues predominate over residues A142–V151. O-linked (Xyl...) (chondroitin sulfate) serine glycosylation is found at S205 and S215. A helical transmembrane segment spans residues G254–L274. Over Y275–A309 the chain is Cytoplasmic. The disordered stretch occupies residues G283–A309. At S284 the chain carries Phosphoserine.

The protein belongs to the syndecan proteoglycan family. In terms of assembly, interacts with CDCP1. Interacts (via C-terminus) with TIAM1 (via PDZ domain). Interacts with MDK. In terms of processing, shedding is enhanced by a number of factors such as heparanase, thrombin or EGF. Also by stress and wound healing. PMA-mediated shedding is inhibited by TIMP3.

It localises to the membrane. The protein resides in the secreted. Its subcellular location is the extracellular exosome. Functionally, cell surface proteoglycan that contains both heparan sulfate and chondroitin sulfate and that links the cytoskeleton to the interstitial matrix. Regulates exosome biogenesis in concert with SDCBP and PDCD6IP. Able to induce its own expression in dental mesenchymal cells and also in the neighboring dental epithelial cells via an MSX1-mediated pathway. This chain is Syndecan-1, found in Cricetulus griseus (Chinese hamster).